We begin with the raw amino-acid sequence, 71 residues long: Large ribosomal subunit protein bL31 (71 aa).

Residues Cys16, Cys18, Cys37, and Cys40 each coordinate Zn(2+).

It belongs to the bacterial ribosomal protein bL31 family. Type A subfamily. In terms of assembly, part of the 50S ribosomal subunit. The cofactor is Zn(2+).

Binds the 23S rRNA. This is Large ribosomal subunit protein bL31 from Chromohalobacter salexigens (strain ATCC BAA-138 / DSM 3043 / CIP 106854 / NCIMB 13768 / 1H11).